A 95-amino-acid polypeptide reads, in one-letter code: Protein TusB (95 aa).

Belongs to the DsrH/TusB family. As to quaternary structure, heterohexamer, formed by a dimer of trimers. The hexameric TusBCD complex contains 2 copies each of TusB, TusC and TusD. The TusBCD complex interacts with TusE.

The protein localises to the cytoplasm. Part of a sulfur-relay system required for 2-thiolation of 5-methylaminomethyl-2-thiouridine (mnm(5)s(2)U) at tRNA wobble positions. In Cronobacter sakazakii (strain ATCC BAA-894) (Enterobacter sakazakii), this protein is Protein TusB.